We begin with the raw amino-acid sequence, 99 residues long: Aspartyl/glutamyl-tRNA(Asn/Gln) amidotransferase subunit C (99 aa).

Belongs to the GatC family. Heterotrimer of A, B and C subunits.

It catalyses the reaction L-glutamyl-tRNA(Gln) + L-glutamine + ATP + H2O = L-glutaminyl-tRNA(Gln) + L-glutamate + ADP + phosphate + H(+). The enzyme catalyses L-aspartyl-tRNA(Asn) + L-glutamine + ATP + H2O = L-asparaginyl-tRNA(Asn) + L-glutamate + ADP + phosphate + 2 H(+). Functionally, allows the formation of correctly charged Asn-tRNA(Asn) or Gln-tRNA(Gln) through the transamidation of misacylated Asp-tRNA(Asn) or Glu-tRNA(Gln) in organisms which lack either or both of asparaginyl-tRNA or glutaminyl-tRNA synthetases. The reaction takes place in the presence of glutamine and ATP through an activated phospho-Asp-tRNA(Asn) or phospho-Glu-tRNA(Gln). This is Aspartyl/glutamyl-tRNA(Asn/Gln) amidotransferase subunit C from Mycolicibacterium vanbaalenii (strain DSM 7251 / JCM 13017 / BCRC 16820 / KCTC 9966 / NRRL B-24157 / PYR-1) (Mycobacterium vanbaalenii).